The chain runs to 533 residues: Calcium-dependent protein kinase 12 (533 aa).

A disordered region spans residues 1-77 (MGNCFTKTYE…RASGGGGEMG (77 aa)). A lipid anchor (N-myristoyl glycine) is attached at Gly-2. Residues 26-38 (ERSKARGGDEPGT) are compositionally biased toward basic and acidic residues. The segment covering 57 to 69 (GSSSAAGALSRRA) has biased composition (low complexity). One can recognise a Protein kinase domain in the interval 91-349 (YQLDRKLGSG…ASQALEHRWL (259 aa)). Residues 97–105 (LGSGQFGTT) and Lys-120 each bind ATP. The active-site Proton acceptor is Asp-215. The autoinhibitory domain stretch occupies residues 354 to 384 (ASDRPIDSAVLSRMKQFKAMNKLKQLALKVI). EF-hand domains lie at 391–426 (EEIK…LGSR), 427–462 (ISEA…KHKL), 463–498 (EKEE…YGMG), and 499–533 (DEAN…GIQT). The Ca(2+) site is built by Asp-404, Asp-406, Ser-408, Thr-410, Glu-415, Asp-440, Asp-442, Ser-444, Ser-446, Glu-451, Asp-476, Asp-478, Ser-480, Tyr-482, Glu-487, Asp-511, Asp-513, Asp-515, Arg-517, and Glu-522.

This sequence belongs to the protein kinase superfamily. Ser/Thr protein kinase family. CDPK subfamily. In terms of tissue distribution, expressed in roots, leaf blades and developing seeds. Expressed in vascular tissues of roots and leaf blades. Expressed in the phloem tissue of the large vascular bundle in leaf blades.

It localises to the membrane. It carries out the reaction L-seryl-[protein] + ATP = O-phospho-L-seryl-[protein] + ADP + H(+). The catalysed reaction is L-threonyl-[protein] + ATP = O-phospho-L-threonyl-[protein] + ADP + H(+). With respect to regulation, activated by calcium. Autophosphorylation may play an important role in the regulation of the kinase activity. Functionally, may play a role in signal transduction pathways that involve calcium as a second messenger. Functions in signal transduction pathways that positively regulate responses to low-nitrogen. Functions in multiple signaling pathways, positively regulating salt tolerance and negatively modulating rice blast fungus resistance. May promote tolerance to salt stress by negatively regulating NADPH oxidase and positively regulating reactive oxygen species (ROS) scavengers. This is Calcium-dependent protein kinase 12 from Oryza sativa subsp. japonica (Rice).